Consider the following 846-residue polypeptide: Aminopeptidase N (846 aa).

Residues glutamate 120 and 252–256 contribute to the substrate site; that span reads GAMEN. Histidine 288 is a Zn(2+) binding site. The active-site Proton acceptor is the glutamate 289. Positions 292 and 311 each coordinate Zn(2+).

Belongs to the peptidase M1 family. In terms of assembly, monomer. Requires Zn(2+) as cofactor.

It is found in the cytoplasm. It catalyses the reaction Release of an N-terminal amino acid, Xaa-|-Yaa- from a peptide, amide or arylamide. Xaa is preferably Ala, but may be most amino acids including Pro (slow action). When a terminal hydrophobic residue is followed by a prolyl residue, the two may be released as an intact Xaa-Pro dipeptide.. Aminopeptidase with broad substrate specificity to several peptides. It has more affinity for oligopeptides than for dipeptides. It plays an essential role in the metabolism, it may be involved in nitrogen supply or protein turnover. The polypeptide is Aminopeptidase N (pepN) (Lactococcus lactis subsp. lactis (strain IL1403) (Streptococcus lactis)).